Reading from the N-terminus, the 552-residue chain is BAR/IMD domain-containing adapter protein 2 (552 aa).

One can recognise an IMD domain in the interval Met-1–Asn-250. Residues Asp-132–Asn-153 are a coiled coil. Ser-261 is subject to Phosphoserine. The segment at Ser-295–Ala-369 is disordered. The residue at position 296 (Thr-296) is a Phosphothreonine. The span at Gln-320–Ser-334 shows a compositional bias: low complexity. Phosphoserine is present on residues Ser-323, Ser-325, and Ser-336. At Thr-340 the chain carries Phosphothreonine. Residue Ser-346 is modified to Phosphoserine. Residues Thr-348 to Met-367 are compositionally biased toward polar residues. Residue Thr-360 is modified to Phosphothreonine. Phosphoserine is present on residues Ser-366, Ser-384, Ser-395, and Ser-454. Residues Asn-374–Ser-437 form the SH3 domain. Positions Leu-447–Asn-457 are enriched in polar residues. Disordered regions lie at residues Leu-447–Ile-466 and Thr-525–Arg-552.

Homodimer. Interacts with CDC42 and RAC1 that have been activated by GTP binding. Interacts with ATN1, ADGRB1, EPS8, SHANK1, SHANK2, SHANK3, WASF1 and WASF2. Interacts with ENAH after recruitment of CDC42. Interacts with TIAM1 and DIAPH1. Interacts (via SH3 domain) with E.coli effector protein EspF(U) (via PXXP motifs). Interacts with E.coli intimin receptor Tir. In terms of processing, phosphorylated on tyrosine residues by INSR in response to insulin treatment. As to expression, isoform 1 and isoform 4 are expressed almost exclusively in brain. Isoform 4 is barely detectable in placenta, prostate and testis. A short isoform is ubiquitous, with the highest expression in liver, prostate, testis and placenta.

The protein resides in the cytoplasm. It is found in the membrane. Its subcellular location is the cell projection. It localises to the filopodium. The protein localises to the ruffle. The protein resides in the cytoskeleton. Functionally, adapter protein that links membrane-bound small G-proteins to cytoplasmic effector proteins. Necessary for CDC42-mediated reorganization of the actin cytoskeleton and for RAC1-mediated membrane ruffling. Involved in the regulation of the actin cytoskeleton by WASF family members and the Arp2/3 complex. Plays a role in neurite growth. Acts syngeristically with ENAH to promote filipodia formation. Plays a role in the reorganization of the actin cytoskeleton in response to bacterial infection. Participates in actin bundling when associated with EPS8, promoting filopodial protrusions. In Homo sapiens (Human), this protein is BAR/IMD domain-containing adapter protein 2 (BAIAP2).